The chain runs to 396 residues: MIISAASDYRAAAQRTLPPFLFHYIDGGAYAEYTLRRNVEDLSQVALRQRVLKNMSDLSLETTLFNETLSMPVALAPVGLCGMYARRGEVQAAAAADAKGIPFTLSTVSVCPIEEVAPTIKRPMWFQLYVLRDRGFMRNALERAKAAGCSTLVFTVDMPTPGARYRDAHSGMSGPNAAMRRYWQAVMHPKWAWDVGLNGRPHDLGNISAYLGKPTGLEDYIGWLANNFDPSISWKDLEWIREFWDGPMVIKGILDPEDARDAVRFGADGIVVSNHGGRQLDGVLSSARALPAIADAVKGDIAILADSGIRNGLDVVRMIALGADTVLLGRAYLYALATAGKAGVANLLDLIEKEMKVAMTLTGAKTISEISGDSLVQELGKSLPAALAPMSKGDTA.

The FMN hydroxy acid dehydrogenase domain occupies M1–G380. Y24 serves as a coordination point for substrate. FMN is bound by residues S106 and Q127. Y129 lines the substrate pocket. T155 is an FMN binding site. R164 contacts substrate. FMN is bound at residue K251. Catalysis depends on H275, which acts as the Proton acceptor. Residue R278 participates in substrate binding. D306–R330 is a binding site for FMN.

The protein belongs to the FMN-dependent alpha-hydroxy acid dehydrogenase family. The cofactor is FMN.

It is found in the cell inner membrane. The catalysed reaction is (S)-lactate + A = pyruvate + AH2. Catalyzes the conversion of L-lactate to pyruvate. Is coupled to the respiratory chain. This Salmonella enteritidis PT4 (strain P125109) protein is L-lactate dehydrogenase.